The following is a 332-amino-acid chain: Fructose-1,6-bisphosphatase class 1 (332 aa).

Mg(2+)-binding residues include E89, D110, L112, and D113. Substrate contacts are provided by residues 113-116 (DGSS), N206, Y239, 257-259 (YLY), and K269. E275 provides a ligand contact to Mg(2+).

Belongs to the FBPase class 1 family. As to quaternary structure, homotetramer. The cofactor is Mg(2+).

It localises to the cytoplasm. It catalyses the reaction beta-D-fructose 1,6-bisphosphate + H2O = beta-D-fructose 6-phosphate + phosphate. The protein operates within carbohydrate biosynthesis; gluconeogenesis. The protein is Fructose-1,6-bisphosphatase class 1 of Shigella sonnei (strain Ss046).